Reading from the N-terminus, the 248-residue chain is Probable transcriptional regulatory protein P9303_05381 (248 aa).

This sequence belongs to the TACO1 family.

The protein resides in the cytoplasm. In Prochlorococcus marinus (strain MIT 9303), this protein is Probable transcriptional regulatory protein P9303_05381.